A 213-amino-acid polypeptide reads, in one-letter code: Uridine kinase (213 aa).

15–22 (GASASGKS) lines the ATP pocket.

The protein belongs to the uridine kinase family.

It localises to the cytoplasm. It carries out the reaction uridine + ATP = UMP + ADP + H(+). The catalysed reaction is cytidine + ATP = CMP + ADP + H(+). The protein operates within pyrimidine metabolism; CTP biosynthesis via salvage pathway; CTP from cytidine: step 1/3. It functions in the pathway pyrimidine metabolism; UMP biosynthesis via salvage pathway; UMP from uridine: step 1/1. The protein is Uridine kinase of Pectobacterium carotovorum subsp. carotovorum (strain PC1).